A 389-amino-acid chain; its full sequence is Packaging protein 3 (389 aa).

The tract at residues 1–131 (MHPVLRQMKP…VKAEVNFQTT (131 aa)) is interaction with packaging protein 1. Positions 350-389 (EKENPDGSVSFQQHERGTQSHENGGHAEPAYSRRQLGRFY) are disordered. Basic and acidic residues predominate over residues 362–374 (QHERGTQSHENGG).

It belongs to the adenoviridae packaging protein 3 family. As to quaternary structure, part of the genome packaging complex composed of packaging proteins 1, 2 and 3; this complex specifically binds to the packaging sequence on the left end of viral genomic DNA and performs packaging of the viral genome. Interacts with hexon-linking protein IIIa; this interaction is required to promote correct genome packaging. Post-translationally, cleaved at different sites by the viral protease during virion maturation.

The protein localises to the host nucleus. Involved in viral genome packaging through its interaction with packaging proteins 1 and 2. After proteolytic cleavage by adenovirus protease, L1 52/55k protein is removed from the capsid during viral maturation. This chain is Packaging protein 3, found in Canine adenovirus serotype 1 (strain CLL) (CAdV-1).